Consider the following 367-residue polypeptide: Heme A synthase (367 aa).

The next 5 membrane-spanning stretches (helical) occupy residues 25-45 (ALRF…LVGG), 111-131 (LIAR…WLTG), 139-159 (WPLV…WWMV), 174-194 (LATH…IMRG), and 210-230 (GFAA…ALVA). A heme-binding site is contributed by histidine 274. Transmembrane regions (helical) follow at residues 276–296 (IGAY…LRAA), 305–325 (AILL…TLLM), and 327–347 (VPLH…GFAV). Residue histidine 335 coordinates heme.

It belongs to the COX15/CtaA family. Type 2 subfamily. Interacts with CtaB. It depends on heme b as a cofactor.

It localises to the cell membrane. It carries out the reaction Fe(II)-heme o + 2 A + H2O = Fe(II)-heme a + 2 AH2. Its pathway is porphyrin-containing compound metabolism; heme A biosynthesis; heme A from heme O: step 1/1. Its function is as follows. Catalyzes the conversion of heme O to heme A by two successive hydroxylations of the methyl group at C8. The first hydroxylation forms heme I, the second hydroxylation results in an unstable dihydroxymethyl group, which spontaneously dehydrates, resulting in the formyl group of heme A. This Rhizobium johnstonii (strain DSM 114642 / LMG 32736 / 3841) (Rhizobium leguminosarum bv. viciae) protein is Heme A synthase.